The sequence spans 59 residues: Cuticle protein 16 isoform D (59 aa).

The protein is Cuticle protein 16 isoform D of Limulus polyphemus (Atlantic horseshoe crab).